A 128-amino-acid polypeptide reads, in one-letter code: Azurin (128 aa).

Residues Ala-1–Lys-128 form the Plastocyanin-like domain. The cysteines at positions 3 and 26 are disulfide-linked. Residues His-46, Cys-112, His-117, and Met-121 each contribute to the Cu cation site.

It localises to the periplasm. Functionally, transfers electrons from cytochrome c551 to cytochrome oxidase. The chain is Azurin from Pseudomonas aeruginosa.